Here is a 201-residue protein sequence, read N- to C-terminus: Small ribosomal subunit protein uS4 (201 aa).

The S4 RNA-binding domain maps to 91–151; it reads ARLDNVIYRA…DRSRSMLWFD (61 aa).

It belongs to the universal ribosomal protein uS4 family. As to quaternary structure, part of the 30S ribosomal subunit. Contacts protein S5. The interaction surface between S4 and S5 is involved in control of translational fidelity.

Its function is as follows. One of the primary rRNA binding proteins, it binds directly to 16S rRNA where it nucleates assembly of the body of the 30S subunit. In terms of biological role, with S5 and S12 plays an important role in translational accuracy. The polypeptide is Small ribosomal subunit protein uS4 (Corynebacterium urealyticum (strain ATCC 43042 / DSM 7109)).